Consider the following 469-residue polypeptide: Ribulose bisphosphate carboxylase large chain (469 aa).

The residue at position 5 (lysine 5) is an N6,N6,N6-trimethyllysine. Asparagine 114 and threonine 164 together coordinate substrate. The Proton acceptor role is filled by lysine 166. Position 168 (lysine 168) interacts with substrate. Residues lysine 192, aspartate 194, and glutamate 195 each contribute to the Mg(2+) site. At lysine 192 the chain carries N6-carboxylysine. Catalysis depends on histidine 285, which acts as the Proton acceptor. Residues arginine 286, histidine 318, and serine 370 each contribute to the substrate site.

Belongs to the RuBisCO large chain family. Type I subfamily. In terms of assembly, heterohexadecamer of 8 large chains and 8 small chains; disulfide-linked. The disulfide link is formed within the large subunit homodimers. It depends on Mg(2+) as a cofactor. The disulfide bond which can form in the large chain dimeric partners within the hexadecamer appears to be associated with oxidative stress and protein turnover.

It localises to the plastid. It is found in the chloroplast. It carries out the reaction 2 (2R)-3-phosphoglycerate + 2 H(+) = D-ribulose 1,5-bisphosphate + CO2 + H2O. The catalysed reaction is D-ribulose 1,5-bisphosphate + O2 = 2-phosphoglycolate + (2R)-3-phosphoglycerate + 2 H(+). Functionally, ruBisCO catalyzes two reactions: the carboxylation of D-ribulose 1,5-bisphosphate, the primary event in carbon dioxide fixation, as well as the oxidative fragmentation of the pentose substrate in the photorespiration process. Both reactions occur simultaneously and in competition at the same active site. In Fleroya rubrostipulata (Mitragyna rubrostipulata), this protein is Ribulose bisphosphate carboxylase large chain.